A 167-amino-acid chain; its full sequence is RNA pyrophosphohydrolase (167 aa).

The Nudix hydrolase domain occupies 8–158 (PYRTCVGMML…KRPVYERVVK (151 aa)). Positions 47–68 (GGVDPGEDTWEAAKRELYEETN) match the Nudix box motif.

This sequence belongs to the Nudix hydrolase family. RppH subfamily. It depends on a divalent metal cation as a cofactor.

Its function is as follows. Accelerates the degradation of transcripts by removing pyrophosphate from the 5'-end of triphosphorylated RNA, leading to a more labile monophosphorylated state that can stimulate subsequent ribonuclease cleavage. The polypeptide is RNA pyrophosphohydrolase (Rhodopseudomonas palustris (strain HaA2)).